The following is a 187-amino-acid chain: Resolvase OPG149 (187 aa).

It belongs to the RuvC family. Poxviruses-type subfamily. Mg(2+) is required as a cofactor.

In terms of biological role, plays a role in DNA replication by cleaving viral DNA concatamers to yield unit-length viral genomes. The concatamer junctions contain inverted repeat sequences that can be extruded as cruciforms, yielding Holliday junctions that A22 protein cleaves. The chain is Resolvase OPG149 (OPG149) from Variola virus (isolate Human/India/Ind3/1967) (VARV).